Reading from the N-terminus, the 177-residue chain is Large ribosomal subunit protein uL6 (177 aa).

It belongs to the universal ribosomal protein uL6 family. Part of the 50S ribosomal subunit.

Its function is as follows. This protein binds to the 23S rRNA, and is important in its secondary structure. It is located near the subunit interface in the base of the L7/L12 stalk, and near the tRNA binding site of the peptidyltransferase center. The polypeptide is Large ribosomal subunit protein uL6 (Rickettsia bellii (strain OSU 85-389)).